Consider the following 386-residue polypeptide: Ferrochelatase (386 aa).

Fe cation is bound by residues H196 and E277.

Belongs to the ferrochelatase family.

Its subcellular location is the cytoplasm. The enzyme catalyses heme b + 2 H(+) = protoporphyrin IX + Fe(2+). It participates in porphyrin-containing compound metabolism; protoheme biosynthesis; protoheme from protoporphyrin-IX: step 1/1. In terms of biological role, catalyzes the ferrous insertion into protoporphyrin IX. The polypeptide is Ferrochelatase (Picosynechococcus sp. (strain ATCC 27264 / PCC 7002 / PR-6) (Agmenellum quadruplicatum)).